The primary structure comprises 116 residues: Beta-2-microglobulin (116 aa).

A signal peptide spans Met-1 to Gly-19. An Ig-like C1-type domain is found at Pro-24 to Ser-111. Cys-44 and Cys-99 form a disulfide bridge.

Belongs to the beta-2-microglobulin family. Heterodimer of an alpha chain and a beta chain. Beta-2-microglobulin is the beta-chain of major histocompatibility complex class I molecules.

It is found in the secreted. Its function is as follows. Component of the class I major histocompatibility complex (MHC). Involved in the presentation of peptide antigens to the immune system. The sequence is that of Beta-2-microglobulin (b2m) from Danio rerio (Zebrafish).